Consider the following 170-residue polypeptide: ATP synthase subunit b (170 aa).

Residues 11-31 (AFTFGDAFFTLFAFAILLVLI) traverse the membrane as a helical segment.

Belongs to the ATPase B chain family. As to quaternary structure, F-type ATPases have 2 components, F(1) - the catalytic core - and F(0) - the membrane proton channel. F(1) has five subunits: alpha(3), beta(3), gamma(1), delta(1), epsilon(1). F(0) has three main subunits: a(1), b(2) and c(10-14). The alpha and beta chains form an alternating ring which encloses part of the gamma chain. F(1) is attached to F(0) by a central stalk formed by the gamma and epsilon chains, while a peripheral stalk is formed by the delta and b chains.

The protein localises to the cell membrane. Functionally, f(1)F(0) ATP synthase produces ATP from ADP in the presence of a proton or sodium gradient. F-type ATPases consist of two structural domains, F(1) containing the extramembraneous catalytic core and F(0) containing the membrane proton channel, linked together by a central stalk and a peripheral stalk. During catalysis, ATP synthesis in the catalytic domain of F(1) is coupled via a rotary mechanism of the central stalk subunits to proton translocation. In terms of biological role, component of the F(0) channel, it forms part of the peripheral stalk, linking F(1) to F(0). In Listeria innocua serovar 6a (strain ATCC BAA-680 / CLIP 11262), this protein is ATP synthase subunit b.